The following is a 264-amino-acid chain: Thiazole synthase (264 aa).

The active-site Schiff-base intermediate with DXP is the Lys106. 1-deoxy-D-xylulose 5-phosphate is bound by residues Gly167, 193 to 194 (AG), and 215 to 216 (NT).

This sequence belongs to the ThiG family. Homotetramer. Forms heterodimers with either ThiH or ThiS.

The protein localises to the cytoplasm. It carries out the reaction [ThiS sulfur-carrier protein]-C-terminal-Gly-aminoethanethioate + 2-iminoacetate + 1-deoxy-D-xylulose 5-phosphate = [ThiS sulfur-carrier protein]-C-terminal Gly-Gly + 2-[(2R,5Z)-2-carboxy-4-methylthiazol-5(2H)-ylidene]ethyl phosphate + 2 H2O + H(+). It participates in cofactor biosynthesis; thiamine diphosphate biosynthesis. Catalyzes the rearrangement of 1-deoxy-D-xylulose 5-phosphate (DXP) to produce the thiazole phosphate moiety of thiamine. Sulfur is provided by the thiocarboxylate moiety of the carrier protein ThiS. In vitro, sulfur can be provided by H(2)S. This Xanthomonas campestris pv. campestris (strain 8004) protein is Thiazole synthase.